A 972-amino-acid polypeptide reads, in one-letter code: Serine/threonine-protein kinase ATG1 (972 aa).

Residues Tyr-18–Val-319 form the Protein kinase domain. Residues Ile-24–Val-32 and Lys-48 contribute to the ATP site. The active-site Proton acceptor is Asp-166. 5 disordered regions span residues Lys-359–Gln-394, Tyr-424–Arg-444, Ala-467–Thr-506, Ala-562–Pro-605, and Asp-743–Gly-764. Positions Tyr-424–Gln-436 are enriched in basic and acidic residues. Residues Ala-562 to Gln-584 are compositionally biased toward polar residues. A compositionally biased stretch (low complexity) spans Thr-585–Pro-605. Residues Glu-750 to Arg-759 show a composition bias toward basic and acidic residues.

This sequence belongs to the protein kinase superfamily. Ser/Thr protein kinase family. APG1/unc-51/ULK1 subfamily. In terms of assembly, homodimer. Forms a ternary complex with ATG13 and ATG17.

The protein resides in the cytoplasm. Its subcellular location is the preautophagosomal structure membrane. It catalyses the reaction L-seryl-[protein] + ATP = O-phospho-L-seryl-[protein] + ADP + H(+). It carries out the reaction L-threonyl-[protein] + ATP = O-phospho-L-threonyl-[protein] + ADP + H(+). Its function is as follows. Serine/threonine protein kinase involved in the cytoplasm to vacuole transport (Cvt) and found to be essential in autophagy, where it is required for the formation of autophagosomes. Involved in the clearance of protein aggregates which cannot be efficiently cleared by the proteasome. Required for selective autophagic degradation of the nucleus (nucleophagy) as well as for mitophagy which contributes to regulate mitochondrial quantity and quality by eliminating the mitochondria to a basal level to fulfill cellular energy requirements and preventing excess ROS production. Also involved in endoplasmic reticulum-specific autophagic process, in selective removal of ER-associated degradation (ERAD) substrates. Plays a key role in ATG9 and ATG23 cycling through the pre-autophagosomal structure and is necessary to promote ATG18 binding to ATG9 through phosphorylation of ATG9. Catalyzes phosphorylation of ATG4, decreasing the interaction between ATG4 and ATG8 and impairing deconjugation of PE-conjugated forms of ATG8. The polypeptide is Serine/threonine-protein kinase ATG1 (Eremothecium gossypii (strain ATCC 10895 / CBS 109.51 / FGSC 9923 / NRRL Y-1056) (Yeast)).